The sequence spans 407 residues: Phosphopentomutase (407 aa).

Mn(2+) is bound by residues aspartate 10, aspartate 306, histidine 311, aspartate 347, histidine 348, and histidine 359.

Belongs to the phosphopentomutase family. The cofactor is Mn(2+).

The protein resides in the cytoplasm. The catalysed reaction is 2-deoxy-alpha-D-ribose 1-phosphate = 2-deoxy-D-ribose 5-phosphate. The enzyme catalyses alpha-D-ribose 1-phosphate = D-ribose 5-phosphate. It participates in carbohydrate degradation; 2-deoxy-D-ribose 1-phosphate degradation; D-glyceraldehyde 3-phosphate and acetaldehyde from 2-deoxy-alpha-D-ribose 1-phosphate: step 1/2. Isomerase that catalyzes the conversion of deoxy-ribose 1-phosphate (dRib-1-P) and ribose 1-phosphate (Rib-1-P) to deoxy-ribose 5-phosphate (dRib-5-P) and ribose 5-phosphate (Rib-5-P), respectively. The sequence is that of Phosphopentomutase from Escherichia coli (strain UTI89 / UPEC).